Here is a 215-residue protein sequence, read N- to C-terminus: Pyridoxine/pyridoxamine 5'-phosphate oxidase (215 aa).

Substrate contacts are provided by residues 9–12 (RRDY) and K69. FMN contacts are provided by residues 64–69 (RVLLLK), 79–80 (FT), K86, and Q108. Substrate is bound by residues Y126, R130, and S134. Residues 143 to 144 (QS) and W188 contribute to the FMN site. 194 to 196 (RLH) serves as a coordination point for substrate. R198 is a binding site for FMN.

This sequence belongs to the pyridoxamine 5'-phosphate oxidase family. As to quaternary structure, homodimer. Requires FMN as cofactor.

It catalyses the reaction pyridoxamine 5'-phosphate + O2 + H2O = pyridoxal 5'-phosphate + H2O2 + NH4(+). The catalysed reaction is pyridoxine 5'-phosphate + O2 = pyridoxal 5'-phosphate + H2O2. Its pathway is cofactor metabolism; pyridoxal 5'-phosphate salvage; pyridoxal 5'-phosphate from pyridoxamine 5'-phosphate: step 1/1. It functions in the pathway cofactor metabolism; pyridoxal 5'-phosphate salvage; pyridoxal 5'-phosphate from pyridoxine 5'-phosphate: step 1/1. In terms of biological role, catalyzes the oxidation of either pyridoxine 5'-phosphate (PNP) or pyridoxamine 5'-phosphate (PMP) into pyridoxal 5'-phosphate (PLP). The sequence is that of Pyridoxine/pyridoxamine 5'-phosphate oxidase from Pseudomonas entomophila (strain L48).